We begin with the raw amino-acid sequence, 203 residues long: Outer-membrane lipoprotein carrier protein (203 aa).

The N-terminal stretch at 1-21 (MKKMAIACALLSSVVASSVWA) is a signal peptide. Residues 178–203 (QQNGAVEPSKFTFTPPQGVTIDDQRK) form a disordered region.

It belongs to the LolA family. Monomer.

The protein resides in the periplasm. Participates in the translocation of lipoproteins from the inner membrane to the outer membrane. Only forms a complex with a lipoprotein if the residue after the N-terminal Cys is not an aspartate (The Asp acts as a targeting signal to indicate that the lipoprotein should stay in the inner membrane). The sequence is that of Outer-membrane lipoprotein carrier protein from Salmonella typhi.